The following is a 470-amino-acid chain: ATP synthase subunit beta (470 aa).

157–164 (GGAGVGKT) serves as a coordination point for ATP.

Belongs to the ATPase alpha/beta chains family. In terms of assembly, F-type ATPases have 2 components, CF(1) - the catalytic core - and CF(0) - the membrane proton channel. CF(1) has five subunits: alpha(3), beta(3), gamma(1), delta(1), epsilon(1). CF(0) has three main subunits: a(1), b(2) and c(9-12). The alpha and beta chains form an alternating ring which encloses part of the gamma chain. CF(1) is attached to CF(0) by a central stalk formed by the gamma and epsilon chains, while a peripheral stalk is formed by the delta and b chains.

It is found in the cell membrane. The catalysed reaction is ATP + H2O + 4 H(+)(in) = ADP + phosphate + 5 H(+)(out). In terms of biological role, produces ATP from ADP in the presence of a proton gradient across the membrane. The catalytic sites are hosted primarily by the beta subunits. This is ATP synthase subunit beta from Pelotomaculum thermopropionicum (strain DSM 13744 / JCM 10971 / SI).